Here is a 227-residue protein sequence, read N- to C-terminus: PKHD-type hydroxylase Bcen_3557 (227 aa).

A Fe2OG dioxygenase domain is found at 78–178 (KVFPPLFNRY…RVASFFWIQS (101 aa)). Residues His96, Asp98, and His159 each contribute to the Fe cation site. Arg169 is a 2-oxoglutarate binding site.

Fe(2+) serves as cofactor. The cofactor is L-ascorbate.

In Burkholderia orbicola (strain AU 1054), this protein is PKHD-type hydroxylase Bcen_3557.